Reading from the N-terminus, the 901-residue chain is Schlafen family member 11 (901 aa).

Mg(2+)-binding residues include E209 and E214. Residue K216 is part of the active site. Zn(2+)-binding residues include H285, C287, C321, and C322. 599–606 (GLPGSGKT) provides a ligand contact to ATP.

This sequence belongs to the Schlafen family. Subgroup III subfamily. As to quaternary structure, homodimer. Interacts with MCM3. Interacts with DHX9. Interacts with RPA1. Mg(2+) is required as a cofactor. In terms of tissue distribution, exhibits a wider expression range in ovarian and colon adenocarcinoma than in their corresponding healthy tissues.

Its subcellular location is the nucleus. It localises to the chromosome. Its function is as follows. Inhibitor of DNA replication that promotes cell death in response to DNA damage. Acts as a guardian of the genome by killing cells with defective replication. Persistently blocks stressed replication forks by opening chromatin across replication initiation sites at stressed replication forks, possibly leading to unwind DNA ahead of the MCM helicase and block fork progression, ultimately leading to cell death. Upon DNA damage, inhibits translation of ATR or ATM based on distinct codon usage without disrupting early DNA damage response signaling. Antiviral restriction factor with manganese-dependent type II tRNA endoribonuclease. A single tRNA molecule is bound and cleaved by the SLFN11 dimer. Specifically abrogates the production of retroviruses such as human immunodeficiency virus 1 (HIV-1) by acting as a specific inhibitor of the synthesis of retroviruses encoded proteins in a codon-usage-dependent manner. Impairs the replication of human cytomegalovirus (HCMV) and some Flaviviruses. Exploits the unique viral codon bias towards A/T nucleotides. Also acts as an interferon (IFN)-induced antiviral protein which acts as an inhibitor of retrovirus protein synthesis. The polypeptide is Schlafen family member 11 (Homo sapiens (Human)).